The chain runs to 445 residues: MIKIRRGLDLPITGEPRQSIEDGPSIRSVAVIGFDYHGMKPTMAVQEGDKVKKGQLLFTDKKTEGVRYTAPASGTVSAVNRGYQRVLQSVVIDVEGGEAETFAKYSESDLANLARQQVVDNLNDAGLWAAIRTRPFSKAPALDAVPAAIFVSAMDTNPLAADPTLIINERPQSFINGLVVLSKLTEGKLFVCHAEGASVPQSSVATYETFGGVHPAGNVGTHMHFLAPVSLERQSWSVGYQDVMAIGDLFTSGELASERVVALGGPQMENPRLVRTLVGASLEELTAGQLKAGENRMISGSVFGGRNAYGPTAFLGRYHNQVSVLAEGRERPFMHFVVPGSKRFSALPIYISTLMKGKKYDFTTSCNGSERAMVPTGSYEQVMPLDILATQLLRSLIVGDTEMAQKLGCLELDEEDLALCSFVCSGKYEYGPILRDNLTRIEKEG.

This sequence belongs to the NqrA family. In terms of assembly, composed of six subunits; NqrA, NqrB, NqrC, NqrD, NqrE and NqrF.

It catalyses the reaction a ubiquinone + n Na(+)(in) + NADH + H(+) = a ubiquinol + n Na(+)(out) + NAD(+). In terms of biological role, NQR complex catalyzes the reduction of ubiquinone-1 to ubiquinol by two successive reactions, coupled with the transport of Na(+) ions from the cytoplasm to the periplasm. NqrA to NqrE are probably involved in the second step, the conversion of ubisemiquinone to ubiquinol. In Teredinibacter turnerae (strain ATCC 39867 / T7901), this protein is Na(+)-translocating NADH-quinone reductase subunit A.